The primary structure comprises 785 residues: Semaphorin-3F (785 aa).

Residues 1-18 form the signal peptide; the sequence is MLVTAFILWASLLTGAWP. The Sema domain maps to 31–545; that stretch reads RVRLSFKELK…SAVGVTHLSL (515 aa). N-linked (GlcNAc...) asparagine glycosylation occurs at Asn53. The cysteines at positions 104 and 115 are disulfide-linked. Asn126 carries an N-linked (GlcNAc...) asparagine glycan. Intrachain disulfides connect Cys133/Cys142, Cys300/Cys412, Cys324/Cys372, and Cys548/Cys566. Residues 583–602 are disordered; it reads RSRRQDVRHGNPIRQCRGFN. One can recognise an Ig-like C2-type domain in the interval 605 to 695; it reads ANKNAVESVQ…KHIVTRVQLH (91 aa). A disulfide bridge connects residues Cys678 and Cys746. A disordered region spans residues 753–785; it reads VPPRPREAPGALRPPELQDQKKPRNRRHHPPDT. Over residues 775–785 the composition is skewed to basic residues; sequence PRNRRHHPPDT.

It belongs to the semaphorin family. Expressed ubiquitously in adulthood. During embryogenesis, expressed in subregions of the central nervous system and various other tissues like skin, kidney, lung and intestine.

The protein localises to the secreted. The protein is Semaphorin-3F (Sema3f) of Mus musculus (Mouse).